Reading from the N-terminus, the 130-residue chain is 3-aminoacrylate deaminase RutC (130 aa).

Belongs to the RutC family.

The catalysed reaction is (Z)-3-aminoacrylate + H2O + H(+) = 3-oxopropanoate + NH4(+). Its function is as follows. Involved in pyrimidine catabolism. Catalyzes the deamination of 3-aminoacrylate to malonic semialdehyde, a reaction that can also occur spontaneously. RutC may facilitate the reaction and modulate the metabolic fitness, rather than catalyzing essential functions. This chain is 3-aminoacrylate deaminase RutC, found in Haliangium ochraceum (strain DSM 14365 / JCM 11303 / SMP-2).